A 64-amino-acid chain; its full sequence is Large ribosomal subunit protein bL33 (64 aa).

The protein belongs to the bacterial ribosomal protein bL33 family.

This is Large ribosomal subunit protein bL33 from Synechococcus elongatus (strain ATCC 33912 / PCC 7942 / FACHB-805) (Anacystis nidulans R2).